The chain runs to 89 residues: Small ribosomal subunit protein uS15 (89 aa).

Belongs to the universal ribosomal protein uS15 family. Part of the 30S ribosomal subunit. Forms a bridge to the 50S subunit in the 70S ribosome, contacting the 23S rRNA.

One of the primary rRNA binding proteins, it binds directly to 16S rRNA where it helps nucleate assembly of the platform of the 30S subunit by binding and bridging several RNA helices of the 16S rRNA. Functionally, forms an intersubunit bridge (bridge B4) with the 23S rRNA of the 50S subunit in the ribosome. This Yersinia pseudotuberculosis serotype O:1b (strain IP 31758) protein is Small ribosomal subunit protein uS15.